The following is an 80-amino-acid chain: Cell division protein ZapB (80 aa).

Positions 3 to 80 (FEVLEQLESK…ALLGKMDEVE (78 aa)) form a coiled coil. A compositionally biased stretch (basic and acidic residues) spans 41-53 (ANELRSQREELEQ). The tract at residues 41–60 (ANELRSQREELEQKSQQAQQ) is disordered.

This sequence belongs to the ZapB family. As to quaternary structure, homodimer. The ends of the coiled-coil dimer bind to each other, forming polymers. Interacts with FtsZ.

It is found in the cytoplasm. Its function is as follows. Non-essential, abundant cell division factor that is required for proper Z-ring formation. It is recruited early to the divisome by direct interaction with FtsZ, stimulating Z-ring assembly and thereby promoting cell division earlier in the cell cycle. Its recruitment to the Z-ring requires functional FtsA or ZipA. The sequence is that of Cell division protein ZapB from Vibrio campbellii (strain ATCC BAA-1116).